The sequence spans 651 residues: Bromodomain-containing protein 7 (651 aa).

Lys21 is covalently cross-linked (Glycyl lysine isopeptide (Lys-Gly) (interchain with G-Cter in SUMO2)). The span at 35–45 shows a compositional bias: polar residues; it reads TELSTGSSGHD. Residues 35–132 are disordered; sequence TELSTGSSGH…SSLAKQEEVE (98 aa). Basic and acidic residues predominate over residues 47–57; it reads SLFEDKNDHDK. Lys52 is covalently cross-linked (Glycyl lysine isopeptide (Lys-Gly) (interchain with G-Cter in SUMO2)). Residues 58–69 show a composition bias toward basic residues; the sequence is HKDRKRKKRKKG. Positions 65-96 match the Nuclear localization signal motif; it reads KRKKGEKQIPGEEKGRKRRRVKEDKKKRDRDR. The span at 70–106 shows a compositional bias: basic and acidic residues; that stretch reads EKQIPGEEKGRKRRRVKEDKKKRDRDRVENEAEKDLQ. Glycyl lysine isopeptide (Lys-Gly) (interchain with G-Cter in SUMO2) cross-links involve residues Lys127, Lys186, Lys197, Lys201, Lys212, and Lys241. The Bromo domain occupies 131 to 235; that stretch reads VEQTPLQEAL…HSGMKILSQE (105 aa). The segment at 253-312 is disordered; that stretch reads TRKQKDGTDTSQSGEDGGCWQREREDSGDAEAHASKSPSKENKKKDNDMLEDKFKSNNLE. The segment covering 273–312 has biased composition (basic and acidic residues); sequence QREREDSGDAEAHASKSPSKENKKKDNDMLEDKFKSNNLE. A phosphoserine mark is found at Ser279 and Ser289. Residues Lys305 and Lys307 each participate in a glycyl lysine isopeptide (Lys-Gly) (interchain with G-Cter in SUMO2) cross-link. Residue Lys328 is modified to N6-acetyllysine. A Glycyl lysine isopeptide (Lys-Gly) (interchain with G-Cter in SUMO2) cross-link involves residue Lys344. At Ser380 the chain carries Phosphoserine. Lys389 participates in a covalent cross-link: Glycyl lysine isopeptide (Lys-Gly) (interchain with G-Cter in SUMO2). Position 482 is a phosphoserine (Ser482). Thr514 bears the Phosphothreonine mark. Residues 536 to 567 are a coiled coil; it reads SEEAEIFQKKLDETTRLLRELQEAQNERLSTR. Ser621 bears the Phosphoserine mark.

As to quaternary structure, interacts with TRIM24, PTPN13 and DVL1. Identified in a complex with SMARCA4/BRG1, SMARCC1/BAF155, SMARCE1/BAF57, DPF2/BAF45D and ARID2, subunits of the SWI/SNF-B (PBAF) chromatin remodeling complex. Interacts with IRF2 and HNRPUL1. Interacts (via N-terminus) with TP53. Interacts (via C-terminus) with EP300. Interacts with BRCA1. Interacts (via bromo domain) with histone H3 (via N-terminus) acetylated at 'Lys-14' (H3K14ac). Has low affinity for histone H3 acetylated at 'Lys-9' (H3K9ac). Has the highest affinity for histone H3 that is acetylated both at 'Lys-9' (H3K9ac) and at 'Lys-14' (H3K14ac). Has very low affinity for non-acetylated histone H3. Interacts (via bromo domain) with histone H4 (via N-terminus) acetylated at 'Lys-8' (H3K8ac) (in vitro).

Its subcellular location is the nucleus. It localises to the chromosome. Functionally, acts both as coactivator and as corepressor. May play a role in chromatin remodeling. Activator of the Wnt signaling pathway in a DVL1-dependent manner by negatively regulating the GSK3B phosphotransferase activity. Induces dephosphorylation of GSK3B at 'Tyr-216'. Down-regulates TRIM24-mediated activation of transcriptional activation by AR. Transcriptional corepressor that down-regulates the expression of target genes. Binds to target promoters, leading to increased histone H3 acetylation at 'Lys-9' (H3K9ac). Binds to the ESR1 promoter. Recruits BRCA1 and POU2F1 to the ESR1 promoter. Coactivator for TP53-mediated activation of transcription of a set of target genes. Required for TP53-mediated cell-cycle arrest in response to oncogene activation. Promotes acetylation of TP53 at 'Lys-382', and thereby promotes efficient recruitment of TP53 to target promoters. Inhibits cell cycle progression from G1 to S phase. In Pongo abelii (Sumatran orangutan), this protein is Bromodomain-containing protein 7 (BRD7).